Here is a 255-residue protein sequence, read N- to C-terminus: Thiazole synthase (255 aa).

Residue Lys-96 is the Schiff-base intermediate with DXP of the active site. 1-deoxy-D-xylulose 5-phosphate contacts are provided by residues Gly-157, 183-184 (AG), and 205-206 (NT).

This sequence belongs to the ThiG family. In terms of assembly, homotetramer. Forms heterodimers with either ThiH or ThiS.

The protein localises to the cytoplasm. It carries out the reaction [ThiS sulfur-carrier protein]-C-terminal-Gly-aminoethanethioate + 2-iminoacetate + 1-deoxy-D-xylulose 5-phosphate = [ThiS sulfur-carrier protein]-C-terminal Gly-Gly + 2-[(2R,5Z)-2-carboxy-4-methylthiazol-5(2H)-ylidene]ethyl phosphate + 2 H2O + H(+). The protein operates within cofactor biosynthesis; thiamine diphosphate biosynthesis. Its function is as follows. Catalyzes the rearrangement of 1-deoxy-D-xylulose 5-phosphate (DXP) to produce the thiazole phosphate moiety of thiamine. Sulfur is provided by the thiocarboxylate moiety of the carrier protein ThiS. In vitro, sulfur can be provided by H(2)S. In Bacillus pumilus (strain SAFR-032), this protein is Thiazole synthase.